Reading from the N-terminus, the 243-residue chain is Pleckstrin homology domain-containing family B member 1 (243 aa).

The PH domain occupies 21 to 128 (ALVRGGWLWR…WKTALMEANS (108 aa)).

As to quaternary structure, binds transducins. Homodimer. Interacts (via PH domain) with MYO1C. Interacts (via PH domain) with MYO7A. As to expression, highly expressed in retina and brain. In retina, abundantly expressed in photoreceptors. Isoform 4 is the predominant isoform expressed in mature olfactory receptor neurons and vestibular and cochlear hair cells. Also expressed in cells with possible sensory function, including peripheral retinal ganglion cells, cochlear interdental cells, and neurons of the circumventricular organ (at protein level).

Its subcellular location is the membrane. The protein localises to the cytoplasm. The polypeptide is Pleckstrin homology domain-containing family B member 1 (Plekhb1) (Mus musculus (Mouse)).